A 328-amino-acid polypeptide reads, in one-letter code: MKPARLMKVFVTGPLPAEGRAALAQAADCEVEQWNSDDPIPRKDLEQGVVGAHGLLCRLSDRVDKKLLDAAGANLRVISTLSVGVDHLALDEIKKRGIRVGYTPGVLTDATAELAVSLLLTTCRRLPEAIEEVKNGGWSSWSPLWMCGYGLSQSTVGIVGLGRIGQAIARRLKPFGVQRFLYTGRQPRPQEAAEFQAEFVPIAQLAAESDFIVVSCSLTPDTMGLCSKDFFQKMKNTAIFINISRGDVVNQEDLYQALASGQIAAAGLDVTTPEPLPPSHPLLTLKNCVILPHIGSATYKTRNTMSLLAANNLLAGLRGEAMPSELKL.

Ser-36 carries the post-translational modification Phosphoserine. 83–84 (VG) contacts substrate. NADP(+) contacts are provided by residues 162-164 (GRI), 185-188 (RQPR), Ser-217, and Ile-243. Residues Arg-245, Asp-269, and 293–296 (HIGS) each bind substrate. The active-site Proton donor is the His-293. Residue Gly-295 participates in NADP(+) binding. Thr-298 is subject to Phosphothreonine.

It belongs to the D-isomer specific 2-hydroxyacid dehydrogenase family. Homodimer.

It carries out the reaction glycolate + NADP(+) = glyoxylate + NADPH + H(+). The enzyme catalyses (R)-glycerate + NAD(+) = 3-hydroxypyruvate + NADH + H(+). It catalyses the reaction (R)-glycerate + NADP(+) = 3-hydroxypyruvate + NADPH + H(+). Enzyme with hydroxy-pyruvate reductase, glyoxylate reductase and D-glycerate dehydrogenase enzymatic activities. Reduces hydroxypyruvate to D-glycerate, glyoxylate to glycolate oxidizes D-glycerate to hydroxypyruvate. This Mus musculus (Mouse) protein is Glyoxylate reductase/hydroxypyruvate reductase (Grhpr).